The sequence spans 186 residues: ATP synthase subunit delta (186 aa).

The protein belongs to the ATPase delta chain family. F-type ATPases have 2 components, F(1) - the catalytic core - and F(0) - the membrane proton channel. F(1) has five subunits: alpha(3), beta(3), gamma(1), delta(1), epsilon(1). F(0) has three main subunits: a(1), b(2) and c(10-14). The alpha and beta chains form an alternating ring which encloses part of the gamma chain. F(1) is attached to F(0) by a central stalk formed by the gamma and epsilon chains, while a peripheral stalk is formed by the delta and b chains.

The protein resides in the cellular chromatophore membrane. Its function is as follows. F(1)F(0) ATP synthase produces ATP from ADP in the presence of a proton or sodium gradient. F-type ATPases consist of two structural domains, F(1) containing the extramembraneous catalytic core and F(0) containing the membrane proton channel, linked together by a central stalk and a peripheral stalk. During catalysis, ATP synthesis in the catalytic domain of F(1) is coupled via a rotary mechanism of the central stalk subunits to proton translocation. Functionally, this protein is part of the stalk that links CF(0) to CF(1). It either transmits conformational changes from CF(0) to CF(1) or is implicated in proton conduction. The chain is ATP synthase subunit delta from Rhodobacter capsulatus (Rhodopseudomonas capsulata).